Here is a 785-residue protein sequence, read N- to C-terminus: Putative lipase C4A8.10 (785 aa).

Disordered regions lie at residues 29-99 (HSAT…SSDF) and 115-140 (NTNAINIPEQTRGVSHTSSSPSVGTS). The span at 32-41 (TSSTTVPPTV) shows a compositional bias: low complexity. The span at 47–58 (TKKESGSIEDRA) shows a compositional bias: basic and acidic residues. Positions 63–86 (MTISSGENISKQISENNSSTNPKH) are enriched in polar residues. Composition is skewed to low complexity over residues 89 to 99 (SESSPLLSSDF) and 127 to 140 (GVSHTSSSPSVGTS). Residue S390 is the Charge relay system of the active site.

The protein belongs to the putative lipase ROG1 family.

This Schizosaccharomyces pombe (strain 972 / ATCC 24843) (Fission yeast) protein is Putative lipase C4A8.10.